A 520-amino-acid polypeptide reads, in one-letter code: Glutamate--cysteine ligase (520 aa).

It belongs to the glutamate--cysteine ligase type 1 family. Type 1 subfamily.

The enzyme catalyses L-cysteine + L-glutamate + ATP = gamma-L-glutamyl-L-cysteine + ADP + phosphate + H(+). It functions in the pathway sulfur metabolism; glutathione biosynthesis; glutathione from L-cysteine and L-glutamate: step 1/2. This is Glutamate--cysteine ligase from Leptospira interrogans serogroup Icterohaemorrhagiae serovar Lai (strain 56601).